The chain runs to 238 residues: Endonuclease V (238 aa).

The Mg(2+) site is built by D46 and D116.

Belongs to the endonuclease V family. Mg(2+) serves as cofactor.

The protein localises to the cytoplasm. It catalyses the reaction Endonucleolytic cleavage at apurinic or apyrimidinic sites to products with a 5'-phosphate.. DNA repair enzyme involved in the repair of deaminated bases. Selectively cleaves double-stranded DNA at the second phosphodiester bond 3' to a deoxyinosine leaving behind the intact lesion on the nicked DNA. The chain is Endonuclease V from Bacillus subtilis (strain 168).